The sequence spans 91 residues: Protein translocase subunit SecG (91 aa).

2 consecutive transmembrane segments (helical) span residues 16-36 and 71-91; these read HTFL…VVLL and LTII…YLGM.

The protein belongs to the SecG family. As to quaternary structure, component of the Sec protein translocase complex. Heterotrimer consisting of SecY, SecE and SecG subunits. The heterotrimers can form oligomers, although 1 heterotrimer is thought to be able to translocate proteins. Interacts with SecDF, and other proteins may be involved. The channel interacts with SecA via subunit SecY. Also part of the accessory SecA2/SecY2 protein translocation apparatus required to export cell wall protein GspB.

It localises to the cell membrane. In terms of biological role, subunit of the protein translocation channel SecYEG. While not essential, it considerably increases the export efficiency of extracellular proteins. The protein is Protein translocase subunit SecG of Staphylococcus aureus (strain NCTC 8325 / PS 47).